The following is a 216-amino-acid chain: uncharacterized protein (216 aa).

Residues G56 and E77 each contribute to the S-adenosyl-L-methionine site.

This sequence belongs to the methyltransferase superfamily. YrrT family.

In terms of biological role, could be a S-adenosyl-L-methionine-dependent methyltransferase. This is an uncharacterized protein from Alkaliphilus oremlandii (strain OhILAs) (Clostridium oremlandii (strain OhILAs)).